The chain runs to 270 residues: Formamidopyrimidine-DNA glycosylase (270 aa).

The active-site Schiff-base intermediate with DNA is the Pro-2. Glu-3 (proton donor) is an active-site residue. Lys-58 serves as the catalytic Proton donor; for beta-elimination activity. The DNA site is built by His-91, Arg-110, and Arg-151. The FPG-type zinc-finger motif lies at 236-270 (FVYGRGGENCKVCGTGLREIKLGQRASVYCPRCQS). The active-site Proton donor; for delta-elimination activity is the Arg-260.

It belongs to the FPG family. Monomer. The cofactor is Zn(2+).

It catalyses the reaction Hydrolysis of DNA containing ring-opened 7-methylguanine residues, releasing 2,6-diamino-4-hydroxy-5-(N-methyl)formamidopyrimidine.. It carries out the reaction 2'-deoxyribonucleotide-(2'-deoxyribose 5'-phosphate)-2'-deoxyribonucleotide-DNA = a 3'-end 2'-deoxyribonucleotide-(2,3-dehydro-2,3-deoxyribose 5'-phosphate)-DNA + a 5'-end 5'-phospho-2'-deoxyribonucleoside-DNA + H(+). Functionally, involved in base excision repair of DNA damaged by oxidation or by mutagenic agents. Acts as a DNA glycosylase that recognizes and removes damaged bases. Has a preference for oxidized purines, such as 7,8-dihydro-8-oxoguanine (8-oxoG). Has AP (apurinic/apyrimidinic) lyase activity and introduces nicks in the DNA strand. Cleaves the DNA backbone by beta-delta elimination to generate a single-strand break at the site of the removed base with both 3'- and 5'-phosphates. The chain is Formamidopyrimidine-DNA glycosylase from Pseudomonas fluorescens (strain ATCC BAA-477 / NRRL B-23932 / Pf-5).